A 582-amino-acid polypeptide reads, in one-letter code: TRAF-type zinc finger domain-containing protein 1 (582 aa).

Alanine 2 is subject to N-acetylalanine. The TRAF-type zinc finger occupies 27-103 (IHEIHCQRNI…DLELSILKLK (77 aa)). The residue at position 191 (serine 191) is a Phosphoserine. A disordered region spans residues 216-238 (EEQERQERNRGQQPPKEGGEDGA). Phosphoserine is present on residues serine 278, serine 320, serine 326, serine 327, serine 409, serine 415, serine 430, and serine 470. 2 disordered regions span residues 402 to 509 (EGIP…IAPG) and 522 to 582 (PENI…EEEE). 2 stretches are compositionally biased toward polar residues: residues 454–471 (PFNN…STSG) and 486–504 (LNNS…SQNG).

In terms of assembly, interacts with MAVS, TICAM1, TRAF1, TRAF2, TRAF3 and TRAF6.

In terms of biological role, negative feedback regulator that controls excessive innate immune responses. Regulates both Toll-like receptor 4 (TLR4) and DDX58/RIG1-like helicases (RLH) pathways. May inhibit the LTR pathway by direct interaction with TRAF6 and attenuation of NF-kappa-B activation. May negatively regulate the RLH pathway downstream from MAVS and upstream of NF-kappa-B and IRF3. The chain is TRAF-type zinc finger domain-containing protein 1 (TRAFD1) from Macaca fascicularis (Crab-eating macaque).